The sequence spans 116 residues: uncharacterized protein (116 aa).

The N-acetylmuramoyl-L-alanine amidase domain maps to 2 to 73 (DGSVGTGRQV…PKALICGHRD (72 aa)).

It to phage T3 and T7 N-acetylmuramoyl-L-alanine amidases.

This is an uncharacterized protein from Haemophilus influenzae (strain ATCC 51907 / DSM 11121 / KW20 / Rd).